A 666-amino-acid polypeptide reads, in one-letter code: DEAD-box ATP-dependent RNA helicase 30 (666 aa).

Residues 53–102 (PDPNLPRRLPFPSSSSTPTAAAPPDSGEPSRARARTETYRTGDMNPYDLR) are disordered. A compositionally biased stretch (low complexity) spans 64 to 76 (PSSSSTPTAAAPP). The segment covering 80–92 (EPSRARARTETYR) has biased composition (basic and acidic residues). Positions 251–279 (RYFQEANFPDYCMQAIAKSGFVEPTPIQS) match the Q motif motif. The 176-residue stretch at 282–457 (WPMALKGRDM…RQFLQNPYKV (176 aa)) folds into the Helicase ATP-binding domain. ATP is bound at residue 295-302 (AQTGSGKT). The DEAD box motif lies at 405–408 (DEAD). In terms of domain architecture, Helicase C-terminal spans 485–630 (RLSKLLSDLM…VVNPALESMA (146 aa)). Positions 632 to 666 (SASSMGGGNFRSRGRGGFGNRSGSNSIPIRGRRPY) are disordered. Gly residues predominate over residues 636-651 (MGGGNFRSRGRGGFGN).

Belongs to the DEAD box helicase family. DDX5/DBP2 subfamily.

The protein localises to the nucleus. The enzyme catalyses ATP + H2O = ADP + phosphate + H(+). ATP-dependent RNA helicase involved nonsense-mediated mRNA decay and ribosome biogenesis through rRNA processing. The polypeptide is DEAD-box ATP-dependent RNA helicase 30 (Oryza sativa subsp. japonica (Rice)).